Here is a 246-residue protein sequence, read N- to C-terminus: Probable transcriptional regulatory protein TM1040_1893 (246 aa).

Residues 1–21 (MAGHSKWANIQHRKGRQDAAR) form a disordered region.

This sequence belongs to the TACO1 family.

It is found in the cytoplasm. In Ruegeria sp. (strain TM1040) (Silicibacter sp.), this protein is Probable transcriptional regulatory protein TM1040_1893.